A 294-amino-acid polypeptide reads, in one-letter code: Cell division protein ZipA (294 aa).

M1 is a topological domain (periplasmic). A helical membrane pass occupies residues 2–22 (EIGLREWLILIGIIVIAGILF). The Cytoplasmic segment spans residues 23 to 294 (DGWRRMRGGK…FERRALTQKR (272 aa)). Positions 47–107 (PDEEGSAEVL…GKRAAEMQPQ (61 aa)) are disordered. Positions 82–91 (AREREREQKP) are enriched in basic and acidic residues.

Belongs to the ZipA family. As to quaternary structure, interacts with FtsZ via their C-terminal domains.

The protein resides in the cell inner membrane. In terms of biological role, essential cell division protein that stabilizes the FtsZ protofilaments by cross-linking them and that serves as a cytoplasmic membrane anchor for the Z ring. Also required for the recruitment to the septal ring of downstream cell division proteins. The sequence is that of Cell division protein ZipA from Pseudomonas putida (strain W619).